Here is a 686-residue protein sequence, read N- to C-terminus: Putative xyloglucan glycosyltransferase 10 (686 aa).

A run of 2 helical transmembrane segments spans residues 114–134 and 160–180; these read LYAF…VELA and AAYV…LFLV. Asp-267 is an active-site residue. Residues Asp-326 and Asp-328 each contribute to the substrate site. Asp-420 is a catalytic residue. 4 helical membrane passes run 498 to 518, 523 to 543, 640 to 656, and 661 to 681; these read LILP…TMFI, LPDW…ILPA, ELAL…RSLL, and IHFY…LDLI.

Belongs to the glycosyltransferase 2 family. Plant cellulose synthase-like C subfamily.

The protein resides in the golgi apparatus membrane. Functionally, probable beta-1,4-glucan synthase rather involved in the synthesis of the xyloglucan backbone than cellulose. Seems to work simultaneously with xyloglucan 6-xylosyltransferase. Xyloglucan is a noncellulosic polysaccharides of plant cell wall and consists of a glucan backbone substituted by xylose, galactose and fucose. This Oryza sativa subsp. indica (Rice) protein is Putative xyloglucan glycosyltransferase 10 (CSLC10).